A 518-amino-acid chain; its full sequence is Glutamate--cysteine ligase (518 aa).

The protein belongs to the glutamate--cysteine ligase type 1 family. Type 1 subfamily.

It catalyses the reaction L-cysteine + L-glutamate + ATP = gamma-L-glutamyl-L-cysteine + ADP + phosphate + H(+). Its pathway is sulfur metabolism; glutathione biosynthesis; glutathione from L-cysteine and L-glutamate: step 1/2. The chain is Glutamate--cysteine ligase from Shigella boydii serotype 18 (strain CDC 3083-94 / BS512).